Here is a 274-residue protein sequence, read N- to C-terminus: 2,3,4,5-tetrahydropyridine-2,6-dicarboxylate N-succinyltransferase (274 aa).

Substrate contacts are provided by R103 and D140.

This sequence belongs to the transferase hexapeptide repeat family. As to quaternary structure, homotrimer.

The protein localises to the cytoplasm. The enzyme catalyses (S)-2,3,4,5-tetrahydrodipicolinate + succinyl-CoA + H2O = (S)-2-succinylamino-6-oxoheptanedioate + CoA. It functions in the pathway amino-acid biosynthesis; L-lysine biosynthesis via DAP pathway; LL-2,6-diaminopimelate from (S)-tetrahydrodipicolinate (succinylase route): step 1/3. The polypeptide is 2,3,4,5-tetrahydropyridine-2,6-dicarboxylate N-succinyltransferase (Actinobacillus pleuropneumoniae serotype 5b (strain L20)).